The following is a 190-amino-acid chain: UPF0200 protein OE_4442F (190 aa).

8 to 15 contributes to the ATP binding site; the sequence is GMPGSGKS. The disordered stretch occupies residues 120–144; it reads ARIEDRDRPGDTDGEPLDAREDRER.

It belongs to the UPF0200 family.

The protein is UPF0200 protein OE_4442F of Halobacterium salinarum (strain ATCC 29341 / DSM 671 / R1).